Consider the following 293-residue polypeptide: Bifunctional protein FolD (293 aa).

NADP(+) is bound by residues Gly-164–Ser-166, Ser-193, and Thr-234.

The protein belongs to the tetrahydrofolate dehydrogenase/cyclohydrolase family. In terms of assembly, homodimer.

It catalyses the reaction (6R)-5,10-methylene-5,6,7,8-tetrahydrofolate + NADP(+) = (6R)-5,10-methenyltetrahydrofolate + NADPH. The enzyme catalyses (6R)-5,10-methenyltetrahydrofolate + H2O = (6R)-10-formyltetrahydrofolate + H(+). It functions in the pathway one-carbon metabolism; tetrahydrofolate interconversion. Functionally, catalyzes the oxidation of 5,10-methylenetetrahydrofolate to 5,10-methenyltetrahydrofolate and then the hydrolysis of 5,10-methenyltetrahydrofolate to 10-formyltetrahydrofolate. The polypeptide is Bifunctional protein FolD (Azobacteroides pseudotrichonymphae genomovar. CFP2).